Reading from the N-terminus, the 756-residue chain is Inactive carboxypeptidase-like protein X2 (756 aa).

The signal sequence occupies residues 1-25; the sequence is MSRPGTATPALALVLLAVTLAGVGA. A disordered region spans residues 51 to 131; sequence EPELETFSPP…DHSVRVARED (81 aa). Residues 68–78 show a composition bias toward basic and acidic residues; it reads EWERRPQEPRP. Residues 79 to 90 are compositionally biased toward basic residues; sequence PKRATKPKKAPK. A compositionally biased stretch (basic and acidic residues) spans 113-131; that stretch reads KSSEKAANDDHSVRVARED. One can recognise an F5/8 type C domain in the interval 134–293; the sequence is ESCPPLGLET…ICMRMEILGC (160 aa). C136 and C293 are oxidised to a cystine. 5 N-linked (GlcNAc...) asparagine glycosylation sites follow: N231, N241, N281, N337, and N491. In terms of domain architecture, Peptidase M14 spans 317–640; that stretch reads KHHNYKEMRQ…ESLIVFMEQV (324 aa).

It belongs to the peptidase M14 family.

It is found in the secreted. In terms of biological role, may be involved in cell-cell interactions. This chain is Inactive carboxypeptidase-like protein X2 (CPXM2), found in Homo sapiens (Human).